The primary structure comprises 201 residues: 3-isopropylmalate dehydratase small subunit (201 aa).

It belongs to the LeuD family. LeuD type 1 subfamily. Heterodimer of LeuC and LeuD.

It carries out the reaction (2R,3S)-3-isopropylmalate = (2S)-2-isopropylmalate. Its pathway is amino-acid biosynthesis; L-leucine biosynthesis; L-leucine from 3-methyl-2-oxobutanoate: step 2/4. Catalyzes the isomerization between 2-isopropylmalate and 3-isopropylmalate, via the formation of 2-isopropylmaleate. This chain is 3-isopropylmalate dehydratase small subunit, found in Thermus thermophilus (strain ATCC BAA-163 / DSM 7039 / HB27).